Here is a 638-residue protein sequence, read N- to C-terminus: Threonine--tRNA ligase (638 aa).

A TGS domain is found at 1 to 61; it reads MPVITLPDGS…DADAQLQIIT (61 aa). The catalytic stretch occupies residues 243 to 534; it reads DHRKIGKALN…LTEEFAGFFP (292 aa). 3 residues coordinate Zn(2+): Cys-334, His-385, and His-511.

It belongs to the class-II aminoacyl-tRNA synthetase family. As to quaternary structure, homodimer. The cofactor is Zn(2+).

It localises to the cytoplasm. It catalyses the reaction tRNA(Thr) + L-threonine + ATP = L-threonyl-tRNA(Thr) + AMP + diphosphate + H(+). Catalyzes the attachment of threonine to tRNA(Thr) in a two-step reaction: L-threonine is first activated by ATP to form Thr-AMP and then transferred to the acceptor end of tRNA(Thr). Also edits incorrectly charged L-seryl-tRNA(Thr). The protein is Threonine--tRNA ligase of Alteromonas mediterranea (strain DSM 17117 / CIP 110805 / LMG 28347 / Deep ecotype).